Here is a 703-residue protein sequence, read N- to C-terminus: Collagen alpha-2(VIII) chain (703 aa).

Residues 1–28 (MLGTLTPLSSLLLLLLVLVLGCGPRASS) form the signal peptide. The interval 29-76 (GGGAGGAAGYAPVKYIQPMQKGPVGPPFREGKGQYLEMPLPLLPMDLK) is nonhelical region (NC2). A disordered region spans residues 70–544 (LLPMDLKGEP…AFDETGIAGL (475 aa)). The interval 77–536 (GEPGPPGKPG…PGPPGAPGAF (460 aa)) is triple-helical region. A compositionally biased stretch (pro residues) spans 79 to 97 (PGPPGKPGPRGPPGPPGFP). The segment covering 166 to 192 (PSGITIPGKPGAQGVPGPPGFQGEPGP) has biased composition (low complexity). Residues 206-224 (GDNGVGQPGLPGAPGQGGA) are compositionally biased toward gly residues. Low complexity-rich tracts occupy residues 265-275 (EPGAVGPKGPP) and 285-297 (AAGL…PSGA). Over residues 433-442 (GRPGGPGVAG) the composition is skewed to gly residues. 2 stretches are compositionally biased toward low complexity: residues 444-462 (LGQK…RGPS) and 476-486 (PQGLPGLKGEP). Pro residues predominate over residues 506 to 532 (TGPPGVPGSPGITGPPGPPGPPGPPGA). Residues 537–703 (DETGIAGLHL…SFSGFLLCPT (167 aa)) form a nonhelical region (NC1) region. One can recognise a C1q domain in the interval 570 to 703 (SAHATPAFTA…SFSGFLLCPT (134 aa)).

Homotrimers, or heterotrimers in association with alpha 2(VIII) type collagens. Four homotrimers can form a tetrahedron stabilized by central interacting C-terminal NC1 trimers. Post-translationally, proteolytically cleaved by neutrophil elastase, in vitro. Prolines at the third position of the tripeptide repeating unit (G-X-Y) are hydroxylated in some or all of the chains. Expressed primarily in the subendothelium of large blood vessels. Also expressed in arterioles and venules in muscle, heart, kidney, spleen, umbilical cord, liver and lung and is also found in connective tissue layers around hair follicles, around nerve bundles in muscle, in the dura of the optic nerve, in cornea and sclera, and in the perichondrium of cartilaginous tissues. In the kidney, expressed in mesangial cells, glomerular endothelial cells, and tubular epithelial cells. Also expressed in mast cells, and in astrocytes during the repair process. Expressed in Descemet's membrane.

The protein resides in the secreted. Its subcellular location is the extracellular space. It is found in the extracellular matrix. It localises to the basement membrane. Macromolecular component of the subendothelium. Major component of the Descemet's membrane (basement membrane) of corneal endothelial cells. Also a component of the endothelia of blood vessels. Necessary for migration and proliferation of vascular smooth muscle cells and thus, has a potential role in the maintenance of vessel wall integrity and structure, in particular in atherogenesis. This Homo sapiens (Human) protein is Collagen alpha-2(VIII) chain (COL8A2).